Reading from the N-terminus, the 380-residue chain is Alcohol dehydrogenase (380 aa).

The Zn(2+) site is built by Cys-48, Thr-50, His-70, Cys-100, Cys-103, Cys-106, Cys-114, and Cys-178. An alcohol is bound by residues Thr-50 and His-70. Thr-50 is an NAD(+) binding site. NAD(+) is bound by residues 203-208, Asp-227, Arg-232, Thr-273, Val-296, 296-298, Phe-323, and Arg-373; these read GLGAVG and VGV.

This sequence belongs to the zinc-containing alcohol dehydrogenase family. Homodimer. It depends on Zn(2+) as a cofactor.

It localises to the cytoplasm. The enzyme catalyses a primary alcohol + NAD(+) = an aldehyde + NADH + H(+). The catalysed reaction is a secondary alcohol + NAD(+) = a ketone + NADH + H(+). The protein is Alcohol dehydrogenase (ADH) of Malus domestica (Apple).